A 71-amino-acid polypeptide reads, in one-letter code: Long neurotoxin 1 (71 aa).

5 disulfides stabilise this stretch: cysteine 3/cysteine 20, cysteine 14/cysteine 41, cysteine 26/cysteine 30, cysteine 45/cysteine 56, and cysteine 57/cysteine 62.

This sequence belongs to the three-finger toxin family. Long-chain subfamily. Type II alpha-neurotoxin sub-subfamily. Expressed by the venom gland.

Its subcellular location is the secreted. Functionally, binds with high affinity to muscular (alpha-1/CHRNA1) and neuronal (alpha-7/CHRNA7) nicotinic acetylcholine receptor (nAChR) and inhibits acetylcholine from binding to the receptor, thereby impairing neuromuscular and neuronal transmission. The sequence is that of Long neurotoxin 1 from Naja haje haje (Egyptian cobra).